The sequence spans 2563 residues: MNNTPAVTATATATATATAMAGSACSNTSTPIAIVGMGCRFAGDATSPQKLWEMVERGGSAWSKVPSSRFNVRGVYHPNGERVGSTHVKGGHFIDEDPALFDAAFFNMTTEVASCMDPQYRLMLEVVYESLESAGITIDGMAGSNTSVFGGVMYHDYQDSLNRDPETVPRYFITGNSGTMLSNRISHFYDLRGPSVTVDTACSTTLTALHLACQSLRTGESDTAIVIGANLLLNPDVFVTMSNLGFLSPDGISYSFDPRANGYGRGEGIAALVIKALPNALRDQDPIRAVIRETALNQDGKTPAITAPSDVAQKSLIQECYDKAGLDMSLTSYVEAHGTGTPTGDPLEISAISAAFKGHPLHLGSVKANIGHTEAASGLASIIKVALALEKGLIPPNARFLQKNSKLMLDQKNIKIPMSAQDWPVKDGTRRASVNNFGFGGSNAHVILESYDRASLALPEDQVHVNGNSEHGRVEDGSKQSRIYVVRAKDEQACRRTIASLRDYIKSVADIDGEPFLASLAYTLGSRRSILPWTSVYVADSLGGLVSALSDESNQPKRANEKVRLGFVFTGQGAQWHAMGRELVNTFPVFKQAILECDGYIKQLGASWNFMEELHRDELTTRVNDAEYSLPLSTAIQIALVRLLWSWGIRPTGITSHSSGEAAAAYAAGALSARSAIGITYIRGVLTTKPKPALAAKGGMMAVGLGRSETNVYISRLNQEDGCVVVGCINSQCSVTVSGDLGAIEKLEKLLHADGIFTRKLKVTEAFHSSHMRPMADAFGASLRDLFNSDNNNDNPNADTSKGVLYSSPKTGSRMTDLKLLLDPTHWMDSMLQPVEFESSLREMCFDPNTKEKAVDVIIEIGPHGALGGPINQVMQDLGLKGTDINYLSCLSRGRSSLETMYRAATELISKGYGLKMDAINFPHGRKEPRVKVLSDLPAYPWNHQTRYWREPRGSRESKQRTHPPHTLIGSRESLSPQFAPKWKHVLRLSDIPWIRDHVVGSSIIFPGAGFISMAIEGFSQVCPPVAGASINYNLRDVELAQALIIPADAEAEVDLRLTIRSCEERSLGTKNWHQFSVHSISGENNTWTEHCTGLIRSESERSHLDCSTVEASRRLNLGSDNRSIDPNDLWESLHANGICHGPIFQNIQRIQNNGQGSFCRFSIADTASAMPHSYENRHIVHPTTLDSVIQAAYTVLPYAGTRMKTAMVPRRLRNVKISSSLADLEAGDALDAQASIKDRNSQSFSTDLAVFDDYDSGSSPSDGIPVIEIEGLVFQSVGSSFSDQKSDSNDTENACSSWVWAPDISLGDSTWLKEKLSTEAETKETELMMDLRRCTINFIQEAVTDLTNSDIQHLDGHLQKYFDWMNVQLDLARQNKLSPASCDWLSDDAEQKKCLQARVAGESVNGEMISRLGPQLIAMLRRETEPLELMMQDQLLSRYYVNAIKWSRSNAQASELIRLCAHKNPRSRILEIGGGTGGCTKLIVNALGNTKPIDRYDFTDVSAGFFESAREQFADWQDVMTFKKLDIESDPEQQGFECATYDVVVACQVLHATRCMKRTLSNVRKLLKPGGNLILVETTRDQLDLFFTFGLLPGWWLSEEPERKSTPSLTTDLWNTMLDTSGFNGVELEVRDCEDDEFYMISTMLSTARKENTTPDTVAESEVLLLHGALRPPSSWLESLQAAICEKTSSSPSINALGEVDTTGRTCIFLGEMESSLLGEVGSETFKSITAMLNNCNALLWVSRGAAMSSEDPWKALHIGLLRTIRNENNGKEYVSLDLDPSRNAYTHESLYAICNIFNGRLGDLSEDKEFEFAERNGVIHVPRLFNDPHWKDQEAVEVTLQPFEQPGRRLRMEVETPGLLDSLQFRDDEGREGKDLPDDWVEIEPKAFGLNFRDVMVAMGQLEANRVMGFECAGVITKLGGAAAASQGLRLGDRVCALLKGHWATRTQTPYTNVVRIPDEMGFPEAASVPLAFTTAYIALYTTAKLRRGERVLIHSGAGGVGQAAIILSQLAGAEVFVTAGTQAKRDFVGDKFGINPDHIFSSRNDLFVDGIKAYTGGLGVHVVLNSLAGQLLQASFDCMAEFGRFVEIGKKDLEQNSRLDMLPFTRDVSFTSIDLLSWQRAKSEEVSEALNHVTKLLETKAIGLIGPIQQHSLSNIEKAFRTMQSGQHVGKVVVNVSGDELVPVGDGGFSLKLKPDSSYLVAGGLGGIGKQICQWLVDHGAKHLIILSRSAKASPFITSLQNQQCAVYLHACDISDQDQVTKVLRLCEEAHAPPIRGIIQGAMVLKDALLSRMTLDEFNAATRPKVQGSWYLHKIAQDVDFFVMLSSLVGVMGGAGQANYAAAGAFQDALAHHRRAHGMPAVTIDLGMVKSVGYVAETGRGVADRLARIGYKPMHEKDVMDVLEKAILCSSPQFPSPPAAVVTGINTSPGAHWTEANWIQEQRFVGLKYRQVLHADQSFVSSHKKGPDGVRAQLSRVTSHDEAISIVLKAMTEKLMRMFGLAEDDMSSSKNLAGVGVDSLVAIELRNWITSEIHVDVSIFELMNGNTIAGLVELVVAKCS.

A Ketosynthase family 3 (KS3) domain is found at 29–450; sequence STPIAIVGMG…GSNAHVILES (422 aa). Residues Cys-202, His-337, and His-372 each act as for beta-ketoacyl synthase activity in the active site. The segment at 568 to 915 is acyl and malonyl transferase; sequence VFTGQGAQWH…TELISKGYGL (348 aa). Ser-658 functions as the For malonyltransferase activity in the catalytic mechanism. Over residues 951–960 the composition is skewed to basic and acidic residues; that stretch reads EPRGSRESKQ. A disordered region spans residues 951–971; the sequence is EPRGSRESKQRTHPPHTLIGS. An N-terminal hotdog fold region spans residues 966–1103; sequence HTLIGSRESL…GLIRSESERS (138 aa). The PKS/mFAS DH domain occupies 966–1284; sequence HTLIGSRESL…FQSVGSSFSD (319 aa). The Proton acceptor; for dehydratase activity role is filled by His-998. A dehydratase-like region spans residues 998–1010; that stretch reads HVVGSSIIFPGAG. Residues 1121-1284 are C-terminal hotdog fold; sequence DNRSIDPNDL…FQSVGSSFSD (164 aa). The Proton donor; for dehydratase activity role is filled by Asp-1187. The methyltransferase stretch occupies residues 1542–1579; sequence YDVVVACQVLHATRCMKRTLSNVRKLLKPGGNLILVET. Positions 2485 to 2562 constitute a Carrier domain; that stretch reads EAISIVLKAM…GLVELVVAKC (78 aa). The residue at position 2522 (Ser-2522) is an O-(pantetheine 4'-phosphoryl)serine.

Pantetheine 4'-phosphate is required as a cofactor.

The enzyme catalyses holo-[2-methylbutanoate polyketide synthase] + 2 malonyl-CoA + S-adenosyl-L-methionine + 2 NADPH + 3 H(+) = (S)-2-methylbutanoyl-[2-methylbutanoate polyketide synthase] + S-adenosyl-L-homocysteine + 2 CO2 + 2 NADP(+) + 2 CoA + H2O. It functions in the pathway polyketide biosynthesis. Diketide synthase; part of the gene cluster that mediates the biosynthesis of compactin, also known as mevastatin or ML-236B, and which acts as a potent competitive inhibitor of HMG-CoA reductase. Compactin biosynthesis is performed in two stages. The first stage is catalyzed by the nonaketide synthase mlcA, which belongs to type I polyketide synthases and catalyzes the iterative nine-step formation of the polyketide. This PKS stage is completed by the action of dehydrogenase mlcG, which catalyzes the NADPH-dependent reduction of the unsaturated tetra-, penta- and heptaketide intermediates that arise during the mlcA-mediated biosynthesis of the nonaketide chain and leads to dihydro-ML-236C carboxylate. Covalently bound dihydro-ML-236C carboxylate is released from mlcA by the mlcF esterase. Conversion of dihydro-ML-236C carboxylate into ML-236A carboxylate is subsequently performed with the participation of molecular oxygen and P450 monoogygenase mlcC. Finally, mlcH performs the conversion of ML-236A carboxylate to ML-236B/compactin carboxylate through the addition of the side-chain diketide moiety produced by the diketide synthase mlcB. This chain is Compactin diketide synthase mlcB (mlcB), found in Penicillium citrinum.